The primary structure comprises 1578 residues: Pentafunctional AROM polypeptide (1578 aa).

Residues 1 to 384 are 3-dehydroquinate synthase; sequence MAEPTKIKIL…YEPKASVVPN (384 aa). NAD(+) is bound by residues 44–46, 81–84, 114–116, and Asp-119; these read DTN, EVSK, and GGV. Arg-130 contributes to the 7-phospho-2-dehydro-3-deoxy-D-arabino-heptonate binding site. Position 139 to 140 (139 to 140) interacts with NAD(+); the sequence is TT. The 7-phospho-2-dehydro-3-deoxy-D-arabino-heptonate site is built by Asp-146 and Lys-152. Residue Lys-161 coordinates NAD(+). Asn-162 contacts 7-phospho-2-dehydro-3-deoxy-D-arabino-heptonate. NAD(+) is bound by residues 179–182 and Asn-190; that span reads FLET. Glu-194 serves as a coordination point for Zn(2+). 7-phospho-2-dehydro-3-deoxy-D-arabino-heptonate is bound by residues 194-197 and Lys-250; that span reads EVIK. Residue Glu-260 is the Proton acceptor; for 3-dehydroquinate synthase activity of the active site. Residues 264 to 268 and His-271 each bind 7-phospho-2-dehydro-3-deoxy-D-arabino-heptonate; that span reads RNLLN. Residue His-271 participates in Zn(2+) binding. His-275 (proton acceptor; for 3-dehydroquinate synthase activity) is an active-site residue. His-287 and Lys-356 together coordinate 7-phospho-2-dehydro-3-deoxy-D-arabino-heptonate. His-287 contacts Zn(2+). The tract at residues 397 to 842 is EPSP synthase; it reads VHPGVEPASN…WDTLRQKFSA (446 aa). Cys-824 (for EPSP synthase activity) is an active-site residue. The shikimate kinase stretch occupies residues 864-1055; it reads TASVFIIGMR…KRKKHSFFVS (192 aa). 871 to 878 lines the ATP pocket; that stretch reads GMRGAGKT. A 3-dehydroquinase region spans residues 1056-1276; it reads LTLPDLRTAG…AAPGQLSATE (221 aa). His-1179 functions as the Proton acceptor; for 3-dehydroquinate dehydratase activity in the catalytic mechanism. Lys-1207 serves as the catalytic Schiff-base intermediate with substrate; for 3-dehydroquinate dehydratase activity. Residues 1289–1578 form a shikimate dehydrogenase region; the sequence is QKKFAVFGTP…EDARAAVLSS (290 aa).

This sequence in the N-terminal section; belongs to the sugar phosphate cyclases superfamily. Dehydroquinate synthase family. In the 2nd section; belongs to the EPSP synthase family. The protein in the 3rd section; belongs to the shikimate kinase family. It in the 4th section; belongs to the type-I 3-dehydroquinase family. This sequence in the C-terminal section; belongs to the shikimate dehydrogenase family. In terms of assembly, homodimer. It depends on Zn(2+) as a cofactor.

It localises to the cytoplasm. It carries out the reaction 7-phospho-2-dehydro-3-deoxy-D-arabino-heptonate = 3-dehydroquinate + phosphate. The catalysed reaction is 3-dehydroquinate = 3-dehydroshikimate + H2O. It catalyses the reaction shikimate + NADP(+) = 3-dehydroshikimate + NADPH + H(+). The enzyme catalyses shikimate + ATP = 3-phosphoshikimate + ADP + H(+). It carries out the reaction 3-phosphoshikimate + phosphoenolpyruvate = 5-O-(1-carboxyvinyl)-3-phosphoshikimate + phosphate. It functions in the pathway metabolic intermediate biosynthesis; chorismate biosynthesis; chorismate from D-erythrose 4-phosphate and phosphoenolpyruvate: step 2/7. It participates in metabolic intermediate biosynthesis; chorismate biosynthesis; chorismate from D-erythrose 4-phosphate and phosphoenolpyruvate: step 3/7. The protein operates within metabolic intermediate biosynthesis; chorismate biosynthesis; chorismate from D-erythrose 4-phosphate and phosphoenolpyruvate: step 4/7. Its pathway is metabolic intermediate biosynthesis; chorismate biosynthesis; chorismate from D-erythrose 4-phosphate and phosphoenolpyruvate: step 5/7. It functions in the pathway metabolic intermediate biosynthesis; chorismate biosynthesis; chorismate from D-erythrose 4-phosphate and phosphoenolpyruvate: step 6/7. Functionally, the AROM polypeptide catalyzes 5 consecutive enzymatic reactions in prechorismate polyaromatic amino acid biosynthesis. This chain is Pentafunctional AROM polypeptide, found in Aspergillus flavus (strain ATCC 200026 / FGSC A1120 / IAM 13836 / NRRL 3357 / JCM 12722 / SRRC 167).